We begin with the raw amino-acid sequence, 121 residues long: Basic phospholipase A2 CoaTx-II (121 aa).

7 disulfide bridges follow: Cys-26–Cys-115, Cys-28–Cys-44, Cys-43–Cys-95, Cys-49–Cys-121, Cys-50–Cys-88, Cys-57–Cys-81, and Cys-75–Cys-86. Residues 105-117 (KKYRIYPKFLCKK) are important for membrane-damaging activities in eukaryotes and bacteria; heparin-binding.

It belongs to the phospholipase A2 family. Group II subfamily. K49 sub-subfamily. In terms of assembly, homodimer; non-covalently-linked. Expressed by the venom gland.

It is found in the secreted. In terms of biological role, snake venom phospholipase A2 (PLA2) that lacks enzymatic inactivity. It shows antibacterial activity against both Gram-negative and Gram-positive bacteria, including methicillin-resistant strains. In vivo, it causes local muscular damage, but no systemic damage (intravenous administration does not elevate plasma creatine kinase). Also causes an inflammatory activity that is demonstrated by mice paw edema induction and pro-inflammatory cytokine IL-6 elevation. A model of myotoxic mechanism has been proposed: an apo Lys49-PLA2 is activated by the entrance of a hydrophobic molecule (e.g. fatty acid) at the hydrophobic channel of the protein leading to a reorientation of a monomer. This reorientation causes a transition between 'inactive' to 'active' states, causing alignment of C-terminal and membrane-docking sites (MDoS) side-by-side and putting the membrane-disruption sites (MDiS) in the same plane, exposed to solvent and in a symmetric position for both monomers. The MDoS region stabilizes the toxin on membrane by the interaction of charged residues with phospholipid head groups. Subsequently, the MDiS region destabilizes the membrane with penetration of hydrophobic residues. This insertion causes a disorganization of the membrane, allowing an uncontrolled influx of ions (i.e. calcium and sodium), and eventually triggering irreversible intracellular alterations and cell death. This Crotalus lutosus abyssus (Grand Canyon rattlesnake) protein is Basic phospholipase A2 CoaTx-II.